A 448-amino-acid chain; its full sequence is Trk system potassium uptake protein TrkA homolog 1 (448 aa).

One can recognise an RCK N-terminal 1 domain in the interval 1–124 (MKAVIIGAGE…RAQVGVDLMI (124 aa)). Residues 7–11 (GAGEV), aspartate 29, 70–71 (TG), and arginine 101 contribute to the NAD(+) site. Positions 144-225 (IDAEMFAEGK…MEDLESVFGS (82 aa)) constitute an RCK C-terminal 1 domain. Residues 230 to 348 (RTRILLIGCG…FEMVGIDMAV (119 aa)) form the RCK N-terminal 2 domain. 232–262 (RILLIGCGIVGMYLAKLIDKEENADLRIIEH) lines the NAD(+) pocket. Residues 368–448 (QTLTTIEGER…AASEVEKYFK (81 aa)) enclose the RCK C-terminal 2 domain.

Part of a potassium transport system. The polypeptide is Trk system potassium uptake protein TrkA homolog 1 (trkA1) (Methanosarcina mazei (strain ATCC BAA-159 / DSM 3647 / Goe1 / Go1 / JCM 11833 / OCM 88) (Methanosarcina frisia)).